We begin with the raw amino-acid sequence, 1097 residues long: Protein kinase C-like 1 (1097 aa).

REM-1 domains follow at residues 2-76 (STSQ…QMQR) and 106-183 (KYEC…FSIN). Positions 189 to 311 (RDYEIMDSTK…AKDQGSSGWL (123 aa)) constitute a C2 domain. A disordered region spans residues 304–359 (DQGSSGWLPAANLPQTGGSGAGTGSSMTGGASYGATSPLPAHNDLRPSVSPSSDAK). Positions 327-340 (GSSMTGGASYGATS) are enriched in low complexity. 2 consecutive Phorbol-ester/DAG-type zinc fingers follow at residues 415–462 (GHQF…VTKC) and 480–530 (PHRF…PDFC). Disordered regions lie at residues 548–594 (KVSP…LRPA), 615–646 (YQEPVELPPQQQNQVVPSTRRRGHGSTDLSFE), and 724–763 (ETSHAKQQNQQVQQVQQQEELGHQRTHSSGKSGKSKRRKR). The span at 574–583 (PSMDSEETLH) shows a compositional bias: basic and acidic residues. The span at 730–741 (QQNQQVQQVQQQ) shows a compositional bias: low complexity. The span at 747–763 (QRTHSSGKSGKSKRRKR) shows a compositional bias: basic residues. In terms of domain architecture, Protein kinase spans 770–1029 (FQFLAVLGKG…AEEIMEHPYF (260 aa)). ATP contacts are provided by residues 776–784 (LGKGNFGKV) and lysine 799. Catalysis depends on aspartate 895, which acts as the Proton acceptor. The AGC-kinase C-terminal domain maps to 1030-1097 (HDVNFDDVLN…FSHISDNATI (68 aa)).

Belongs to the protein kinase superfamily. AGC Ser/Thr protein kinase family. PKC subfamily.

The enzyme catalyses L-seryl-[protein] + ATP = O-phospho-L-seryl-[protein] + ADP + H(+). The catalysed reaction is L-threonyl-[protein] + ATP = O-phospho-L-threonyl-[protein] + ADP + H(+). In terms of biological role, necessary for osmotic stability. The polypeptide is Protein kinase C-like 1 (PKC1) (Candida albicans (Yeast)).